The chain runs to 82 residues: uncharacterized protein (82 aa).

Functionally, could be a silencing control element for the regulation of the restriction system. This is an uncharacterized protein from Herpetosiphon aurantiacus (Herpetosiphon giganteus).